The sequence spans 598 residues: Phenylalanine--tRNA ligase beta subunit, cytoplasmic (598 aa).

The 81-residue stretch at 303 to 383 folds into the B5 domain; sequence LAVYDMEVPL…IAYGFNNIPT (81 aa). 4 residues coordinate Mg(2+): Asp361, Asp367, Glu370, and Asp371.

This sequence belongs to the phenylalanyl-tRNA synthetase beta subunit family. Type 2 subfamily. Tetramer of two alpha and two beta subunits. Requires Mg(2+) as cofactor.

The protein localises to the cytoplasm. Its subcellular location is the cytosol. It carries out the reaction tRNA(Phe) + L-phenylalanine + ATP = L-phenylalanyl-tRNA(Phe) + AMP + diphosphate + H(+). This chain is Phenylalanine--tRNA ligase beta subunit, cytoplasmic, found in Arabidopsis thaliana (Mouse-ear cress).